The chain runs to 96 residues: Ferredoxin (96 aa).

Residues 4–94 (YKVKLLTPEG…DVVIETHKEE (91 aa)) form the 2Fe-2S ferredoxin-type domain. Residues Cys40, Cys45, Cys48, and Cys78 each coordinate [2Fe-2S] cluster.

This sequence belongs to the 2Fe2S plant-type ferredoxin family. [2Fe-2S] cluster serves as cofactor.

The protein resides in the plastid. It is found in the chloroplast. In terms of biological role, ferredoxins are iron-sulfur proteins that transfer electrons in a wide variety of metabolic reactions. This Panax ginseng (Korean ginseng) protein is Ferredoxin.